An 89-amino-acid chain; its full sequence is Small ribosomal subunit protein uS15 (89 aa).

It belongs to the universal ribosomal protein uS15 family. As to quaternary structure, part of the 30S ribosomal subunit. Forms a bridge to the 50S subunit in the 70S ribosome, contacting the 23S rRNA.

Its function is as follows. One of the primary rRNA binding proteins, it binds directly to 16S rRNA where it helps nucleate assembly of the platform of the 30S subunit by binding and bridging several RNA helices of the 16S rRNA. Functionally, forms an intersubunit bridge (bridge B4) with the 23S rRNA of the 50S subunit in the ribosome. The chain is Small ribosomal subunit protein uS15 from Lacticaseibacillus casei (strain BL23) (Lactobacillus casei).